Reading from the N-terminus, the 222-residue chain is Formimidoylglutamase (222 aa).

6 residues coordinate Mn(2+): His34, Asp59, His61, Asp63, Asp150, and Asp152.

Belongs to the arginase family. The cofactor is Mn(2+).

It carries out the reaction N-formimidoyl-L-glutamate + H2O = formamide + L-glutamate. It functions in the pathway amino-acid degradation; L-histidine degradation into L-glutamate; L-glutamate from N-formimidoyl-L-glutamate (hydrolase route): step 1/1. Its function is as follows. Catalyzes the conversion of N-formimidoyl-L-glutamate to L-glutamate and formamide. The chain is Formimidoylglutamase (hutG) from Klebsiella aerogenes (Enterobacter aerogenes).